We begin with the raw amino-acid sequence, 483 residues long: Nucleolar protein 4 (483 aa).

Disordered stretches follow at residues glutamine 210–serine 418 and serine 435–isoleucine 483. Positions glutamine 211–methionine 225 are enriched in acidic residues. 3 stretches are compositionally biased toward polar residues: residues threonine 229 to glycine 254, alanine 262 to leucine 271, and glutamine 302 to serine 317. Basic and acidic residues-rich tracts occupy residues phenylalanine 319–asparagine 330 and leucine 340–glycine 350. Residues serine 351–serine 363 are compositionally biased toward polar residues. 3 stretches are compositionally biased toward basic and acidic residues: residues glycine 364–glutamate 374, histidine 391–lysine 409, and serine 435–aspartate 451. The segment covering alanine 467–isoleucine 483 has biased composition (polar residues).

Its subcellular location is the nucleus. It localises to the nucleolus. This Mus musculus (Mouse) protein is Nucleolar protein 4 (Nol4).